We begin with the raw amino-acid sequence, 134 residues long: Profilin-4 (134 aa).

Cys-13 and Cys-118 form a disulfide bridge. The Involved in PIP2 interaction signature appears at 84 to 100 (AVIRGKKGSGGITIKKT). Thr-114 bears the Phosphothreonine mark.

It belongs to the profilin family. As to quaternary structure, occurs in many kinds of cells as a complex with monomeric actin in a 1:1 ratio. Post-translationally, phosphorylated by MAP kinases.

It localises to the cytoplasm. The protein resides in the cytoskeleton. Binds to actin and affects the structure of the cytoskeleton. At high concentrations, profilin prevents the polymerization of actin, whereas it enhances it at low concentrations. This is Profilin-4 from Olea europaea (Common olive).